The chain runs to 314 residues: Formimidoylglutamase (314 aa).

The Mn(2+) site is built by histidine 127, aspartate 153, histidine 155, aspartate 157, aspartate 245, and aspartate 247.

The protein belongs to the arginase family. The cofactor is Mn(2+).

It carries out the reaction N-formimidoyl-L-glutamate + H2O = formamide + L-glutamate. The protein operates within amino-acid degradation; L-histidine degradation into L-glutamate; L-glutamate from N-formimidoyl-L-glutamate (hydrolase route): step 1/1. Functionally, catalyzes the conversion of N-formimidoyl-L-glutamate to L-glutamate and formamide. In Aeromonas salmonicida (strain A449), this protein is Formimidoylglutamase.